The primary structure comprises 307 residues: Ethylmalonyl-CoA decarboxylase (307 aa).

Residue A2 is modified to N-acetylalanine. The residue at position 217 (K217) is an N6-acetyllysine; alternate. The residue at position 217 (K217) is an N6-succinyllysine; alternate. N6-succinyllysine is present on K301.

It belongs to the enoyl-CoA hydratase/isomerase family.

It is found in the cytoplasm. The protein resides in the cytosol. It catalyses the reaction (2S)-ethylmalonyl-CoA + H(+) = butanoyl-CoA + CO2. It carries out the reaction (S)-methylmalonyl-CoA + H(+) = propanoyl-CoA + CO2. The catalysed reaction is (2R)-ethylmalonyl-CoA + H(+) = butanoyl-CoA + CO2. In terms of biological role, decarboxylates ethylmalonyl-CoA, a potentially toxic metabolite, to form butyryl-CoA, suggesting it might be involved in metabolite proofreading. Acts preferentially on (S)-ethylmalonyl-CoA but also has some activity on the (R)-isomer. Also has methylmalonyl-CoA decarboxylase activity at lower level. This chain is Ethylmalonyl-CoA decarboxylase (ECHDC1), found in Homo sapiens (Human).